Here is a 184-residue protein sequence, read N- to C-terminus: Spiro-conjugate synthase (184 aa).

Cysteine 57 and cysteine 184 are oxidised to a cystine. Residue glutamine 115 participates in (1S,3R,6R,8R,9R,11R,14S,15S,19R,20R)-8-ethyl-9,15-dihydroxy-3,4,6,20-tetramethyl-21,23-dioxo-24-azapentacyclo[20.2.1.0(1,6).0(11,20).0(14,19)]pentacosa-4,12,22(25)-trien-25-olate binding.

Homodimer.

The catalysed reaction is 4-[(1R,2R,4aS,5S,8aR)-2-[(2R,3R,5E,7E)-3-ethyl-2-hydroxy-5,7-dimethylnona-5,7-dien-1-yl]-5-hydroxy-1-methyl-1,2,4a,5,6,7,8,8a-octahydronaphthalene-1-carbonyl]-2-methylidene-5-oxo-2,5-dihydro-1H-pyrrol-3-olate = (1S,3R,6R,8R,9R,11R,14S,15S,19R,20R)-8-ethyl-9,15-dihydroxy-3,4,6,20-tetramethyl-21,23-dioxo-24-azapentacyclo[20.2.1.0(1,6).0(11,20).0(14,19)]pentacosa-4,12,22(25)-trien-25-olate. It participates in antibiotic biosynthesis. Its function is as follows. Involved in the biosynthesis of the spirotetramate antibiotics pyrroindomycins. Catalyzes the intramolecular cyclization forming the spiro-conjugate moiety in pyrroindomycins, via an exo-selective [4+2] cycloaddition reaction. The protein is Spiro-conjugate synthase of Streptomyces rugosporus.